We begin with the raw amino-acid sequence, 193 residues long: Acyl carrier protein phosphodiesterase (193 aa).

This sequence belongs to the AcpH family.

It carries out the reaction holo-[ACP] + H2O = apo-[ACP] + (R)-4'-phosphopantetheine + H(+). In terms of biological role, converts holo-ACP to apo-ACP by hydrolytic cleavage of the phosphopantetheine prosthetic group from ACP. The sequence is that of Acyl carrier protein phosphodiesterase from Salmonella choleraesuis (strain SC-B67).